We begin with the raw amino-acid sequence, 161 residues long: Epididymal protein 13 (161 aa).

Residues 1 to 23 (MHRSEPFLKMSLLILLFLGLAEA) form the signal peptide. Asn-56 carries N-linked (GlcNAc...) asparagine glycosylation.

It is found in the secreted. This Homo sapiens (Human) protein is Epididymal protein 13.